The primary structure comprises 242 residues: MSTYNKNRPQTIQIMFNSIAKQYDRTNAVLSFCLHRRWNLELVKKVQSQQTSHTLLDLCAGTGDVAFSYLNQVSAPCQAYLVDFSSEMLACAEEKAKSFGKTPHSFQYVLADVQRLPFSNQTMDCATMAYGIRNIHHPLQSLQETYRVLKPGGCLGILELTRPENKFLQIGHQLYLKTLLPLLGKWLTANENAYQYLRKSIHTFIPPGELEELVKTAGFINTGRYSLAGGIATIITGFKPMK.

Residues threonine 62, aspartate 83, and 112-113 (DV) each bind S-adenosyl-L-methionine.

This sequence belongs to the class I-like SAM-binding methyltransferase superfamily. MenG/UbiE family.

The enzyme catalyses a 2-demethylmenaquinol + S-adenosyl-L-methionine = a menaquinol + S-adenosyl-L-homocysteine + H(+). It participates in quinol/quinone metabolism; menaquinone biosynthesis; menaquinol from 1,4-dihydroxy-2-naphthoate: step 2/2. Functionally, methyltransferase required for the conversion of demethylmenaquinol (DMKH2) to menaquinol (MKH2). The sequence is that of Demethylmenaquinone methyltransferase from Protochlamydia amoebophila (strain UWE25).